Reading from the N-terminus, the 120-residue chain is Small ribosomal subunit protein uS10 (120 aa).

Ser-16 and Ser-18 each carry phosphoserine.

It belongs to the universal ribosomal protein uS10 family. In terms of tissue distribution, expressed ubiquitously in embryos, highest expression is in the midgut.

The polypeptide is Small ribosomal subunit protein uS10 (RpS20) (Drosophila melanogaster (Fruit fly)).